Consider the following 1025-residue polypeptide: Multidrug resistance protein MdtC (1025 aa).

A run of 12 helical transmembrane segments spans residues 3-23 (FFALFIYRPVATILLSVAITL), 333-353 (EVEQTLIISVALVILVVFLFL), 360-380 (IIPAVSVPVSLIGTFAAMYLC), 387-407 (LSLMALTIATGFVVDDAIVVL), 431-451 (VGFTVLSMSLSLVAVFLPLLL), 469-489 (VAIGISLLVSLTLTPMMCGWM), 528-548 (LVGVVLLGTIALNIWLYISIP), 853-873 (VILIIAAIATVYIVLGILYES), 875-895 (VHPLTILSTLPSAGVGALLAL), 897-917 (LFNAPFSLIALIGIMLLIGIV), 953-973 (PIMMTTLAALFGALPLVLSGG), and 984-1004 (ITIVGGLVMSQLLTLYTTPVV).

It belongs to the resistance-nodulation-cell division (RND) (TC 2.A.6) family. MdtC subfamily. Part of a tripartite efflux system composed of MdtA, MdtB and MdtC. MdtC forms a heteromultimer with MdtB.

The protein resides in the cell inner membrane. Its function is as follows. The MdtABC tripartite complex confers resistance against novobiocin and deoxycholate. This Escherichia coli O9:H4 (strain HS) protein is Multidrug resistance protein MdtC.